Here is a 358-residue protein sequence, read N- to C-terminus: Thiol protease aleurain (358 aa).

Positions 1 to 21 (MSAKTILSSVVLVVLVAASAA) are cleaved as a signal peptide. The segment at 22–42 (ANIGFDESNPIRMVSDGLREV) is interaction with VSR1. Positions 22–140 (ANIGFDESNP…KGSHKVTEAA (119 aa)) are cleaved as a propeptide — activation peptide. Residue Asn-125 is glycosylated (N-linked (GlcNAc...) asparagine). 2 disulfide bridges follow: Cys-162-Cys-205 and Cys-196-Cys-238. The active site involves Cys-165. A glycan (N-linked (GlcNAc...) asparagine) is linked at Asn-254. The cysteines at positions 296 and 346 are disulfide-linked. Residues His-305 and Asn-325 contribute to the active site.

It belongs to the peptidase C1 family. In terms of assembly, interacts with VSR1/BP80B. Expressed in leaves (at protein level).

It is found in the vacuole. The enzyme catalyses Hydrolysis of proteins, acting as an aminopeptidase (notably, cleaving Arg-|-Xaa bonds) as well as an endopeptidase.. Functionally, may play a role in proteolysis leading to mobilization of nitrogen during senescence and starvation. The polypeptide is Thiol protease aleurain (Arabidopsis thaliana (Mouse-ear cress)).